A 478-amino-acid chain; its full sequence is 9-divinyl ether synthase (478 aa).

C431 provides a ligand contact to heme.

The protein belongs to the cytochrome P450 family. 9-divinyl ether synthase subfamily.

The catalysed reaction is (9S)-hydroperoxy-(10E,12Z)-octadecadienoate = colneleate + H2O. Functionally, involved in the biosynthesis of the anti-fungal toxins colneleic acid and colnelenic acid. The chain is 9-divinyl ether synthase (DES) from Capsicum annuum (Capsicum pepper).